Consider the following 460-residue polypeptide: Chromosomal replication initiator protein DnaA (460 aa).

A domain I, interacts with DnaA modulators region spans residues 1–78 (MENFWQACSA…VPVEVQFVLD (78 aa)). The domain II stretch occupies residues 78-123 (DPRLVAARRPAAQASVVSDRADDVPSNVLEPIPSNATDHTPRRDQS). The interval 124–340 (RINTALTFDS…GALRKILAYS (217 aa)) is domain III, AAA+ region. ATP is bound by residues glycine 168, glycine 170, lysine 171, and threonine 172. Positions 341–460 (RFHGKDITIE…LHVLEQTLKG (120 aa)) are domain IV, binds dsDNA.

It belongs to the DnaA family. Oligomerizes as a right-handed, spiral filament on DNA at oriC.

It localises to the cytoplasm. Its function is as follows. Plays an essential role in the initiation and regulation of chromosomal replication. ATP-DnaA binds to the origin of replication (oriC) to initiate formation of the DNA replication initiation complex once per cell cycle. Binds the DnaA box (a 9 base pair repeat at the origin) and separates the double-stranded (ds)DNA. Forms a right-handed helical filament on oriC DNA; dsDNA binds to the exterior of the filament while single-stranded (ss)DNA is stabiized in the filament's interior. The ATP-DnaA-oriC complex binds and stabilizes one strand of the AT-rich DNA unwinding element (DUE), permitting loading of DNA polymerase. After initiation quickly degrades to an ADP-DnaA complex that is not apt for DNA replication. Binds acidic phospholipids. In Herminiimonas arsenicoxydans, this protein is Chromosomal replication initiator protein DnaA.